A 260-amino-acid chain; its full sequence is Putative ABC transporter ATP-binding protein (260 aa).

One can recognise an ABC transporter domain in the interval 4 to 243 (ISMKNVTLKK…QVLENFYESP (240 aa)). 36–43 (GLNGSGKT) is a binding site for ATP.

This sequence belongs to the ABC transporter superfamily.

This is Putative ABC transporter ATP-binding protein (abcX) from Streptococcus mutans serotype c (strain ATCC 700610 / UA159).